Reading from the N-terminus, the 617-residue chain is E3 ubiquitin-protein ligase synoviolin (617 aa).

At 1–4 the chain is on the cytoplasmic side; sequence MFRT. The interval 1 to 84 is necessary and sufficient for SEL1L interaction; it reads MFRTAVMMAA…EHLLERSWYA (84 aa). The tract at residues 1–251 is involved in FAM8A1 interaction; the sequence is MFRTAVMMAA…LFAIRPMYLA (251 aa). A helical membrane pass occupies residues 5–25; it reads AVMMAASLALTGAVVAHAYYL. At 26-41 the chain is on the lumenal side; that stretch reads KHQFYPTVVYLTKSSP. The chain crosses the membrane as a helical span at residues 42–62; sequence SMAVLYIQAFVLVFLLGKVMG. The Cytoplasmic portion of the chain corresponds to 63–98; sequence KVFFGQLRAAEMEHLLERSWYAVTETCLAFTVFRDD. The chain crosses the membrane as a helical span at residues 99–119; the sequence is FSPRFVALFTLLLFLKCFHWL. The Lumenal segment spans residues 120–140; it reads AEDRVDFMERSPNISWLFHCR. The helical transmembrane segment at 141–161 threads the bilayer; sequence IVSLMFLLGILDFLFVSHAYH. Over 162–169 the chain is Cytoplasmic; the sequence is SILTRGAS. A helical transmembrane segment spans residues 170-190; the sequence is VQLVFGFEYAILMTMVLTIFI. Topologically, residues 191–224 are lumenal; sequence KYVLHSVDLQSENPWDNKAVYMLYTELFTGFIKV. The chain crosses the membrane as a helical span at residues 225–245; the sequence is LLYMAFMTIMIKVHTFPLFAI. Positions 236–270 are interaction with p53/TP53; that stretch reads KVHTFPLFAIRPMYLAMRQFKKAVTDAIMSRRAIR. Residues 246–617 are Cytoplasmic-facing; the sequence is RPMYLAMRQF…LQKLESPVAH (372 aa). The Zn(2+) site is built by Cys291, Cys294, Cys307, His309, His312, Cys315, Cys326, and Cys329. Residues 291–330 form an RING-type; atypical zinc finger; that stretch reads CIICREEMVTGAKRLPCNHIFHTSCLRSWFQRQQTCPTCR. Disordered stretches follow at residues 337-375, 393-453, and 535-617; these read SLPA…GLLP, PVPP…PAPG, and RPAT…PVAH. Pro residues predominate over residues 341–375; that stretch reads QSPPPPEPADQGPPPAPHPPPLLPQPPNFPQGLLP. Low complexity predominate over residues 417 to 451; that stretch reads PSGAATTTAAGTSATAASATASGPGSGSAPEAGPA. Positions 480–535 are HAF-H domain; necessary to form higher-order Hrd1 complexes; it reads GFAGLTPEELRALEGHERQHLEARLQSLRNIHTLLDAAMLQINQYLTVLASLGPPR. A compositionally biased stretch (low complexity) spans 537 to 569; that stretch reads ATSVNSTEETATTVVAAASSTSIPSSEATTPTP. Residues 591–600 are compositionally biased toward acidic residues; the sequence is EMPEDGEPDA. Ser613 is subject to Phosphoserine.

Belongs to the HRD1 family. In terms of assembly, homodimer. Interacts with p53/TP53. Interacts with HTT. Component of the HRD1 complex, which comprises at least SYNV1/HRD1, DERL1/2, FAM8A1, HERPUD1/HERP, OS9, SEL1L and UBE2J1. FAM8A1 is stabilized by interaction with SYNV1, which prevents its proteasomal degradation. OS9 and UBE2J1 recruitment to the complex may be mediated by SEL1L. SYNV1 assembles with SEL1L and FAM8A1 through its transmembrane domains, but interaction with its cytoplasmic domain is required to confer stability to FAM8A1 and enhance recruitment of HERPUD1. The HRD1 complex also associates with VIMP and may transfer misfolded proteins from the endoplasmic reticulum to VCP. May form a complex with ERLEC1, HSPA5, OS9 and SEL1L. Interacts with VCP. Interacts with UBXN6. Interacts with BAG6. Interacts with NFE2L1. Interacts (via N-terminus) with components of the pre-B cell receptor, including IGLL1 and VPREB1. Interacts with CREB3L3; this interaction leads to CREB3L3 ubiquitination and proteasomal degradation. In terms of processing, not N-glycosylated. Auto-ubiquitinated. Deubiquitinated by USP19. Ubiquitously expressed, with highest levels in liver and kidney (at protein level). Up-regulated in synovial tissues from patients with rheumatoid arthritis (at protein level).

Its subcellular location is the endoplasmic reticulum membrane. It carries out the reaction S-ubiquitinyl-[E2 ubiquitin-conjugating enzyme]-L-cysteine + [acceptor protein]-L-lysine = [E2 ubiquitin-conjugating enzyme]-L-cysteine + N(6)-ubiquitinyl-[acceptor protein]-L-lysine.. It functions in the pathway protein modification; protein ubiquitination. Functionally, E3 ubiquitin-protein ligase which accepts ubiquitin specifically from endoplasmic reticulum-associated UBC7 E2 ligase and transfers it to substrates, promoting their degradation. Component of the endoplasmic reticulum quality control (ERQC) system also called ER-associated degradation (ERAD) involved in ubiquitin-dependent degradation of misfolded endoplasmic reticulum proteins. Also promotes the degradation of normal but naturally short-lived proteins such as SGK. Protects cells from ER stress-induced apoptosis. Protects neurons from apoptosis induced by polyglutamine-expanded huntingtin (HTT) or unfolded GPR37 by promoting their degradation. Sequesters p53/TP53 in the cytoplasm and promotes its degradation, thereby negatively regulating its biological function in transcription, cell cycle regulation and apoptosis. Mediates the ubiquitination and subsequent degradation of cytoplasmic NFE2L1. During the early stage of B cell development, required for degradation of the pre-B cell receptor (pre-BCR) complex, hence supporting further differentiation into mature B cells. In Homo sapiens (Human), this protein is E3 ubiquitin-protein ligase synoviolin.